The primary structure comprises 358 residues: Chorismate synthase (358 aa).

2 residues coordinate NADP(+): Arg46 and Arg52. Residues 123 to 125 (RSS), 239 to 240 (NA), Gly283, 298 to 302 (KSVAT), and Arg324 each bind FMN.

This sequence belongs to the chorismate synthase family. Homotetramer. Requires FMNH2 as cofactor.

The catalysed reaction is 5-O-(1-carboxyvinyl)-3-phosphoshikimate = chorismate + phosphate. The protein operates within metabolic intermediate biosynthesis; chorismate biosynthesis; chorismate from D-erythrose 4-phosphate and phosphoenolpyruvate: step 7/7. In terms of biological role, catalyzes the anti-1,4-elimination of the C-3 phosphate and the C-6 proR hydrogen from 5-enolpyruvylshikimate-3-phosphate (EPSP) to yield chorismate, which is the branch point compound that serves as the starting substrate for the three terminal pathways of aromatic amino acid biosynthesis. This reaction introduces a second double bond into the aromatic ring system. The chain is Chorismate synthase from Parabacteroides distasonis (strain ATCC 8503 / DSM 20701 / CIP 104284 / JCM 5825 / NCTC 11152).